We begin with the raw amino-acid sequence, 784 residues long: Probable phosphoketolase (784 aa).

It belongs to the XFP family. Thiamine diphosphate serves as cofactor.

This chain is Probable phosphoketolase, found in Rhodopseudomonas palustris (strain HaA2).